The sequence spans 425 residues: Serine--tRNA ligase (425 aa).

L-serine is bound at residue threonine 230–glutamate 232. Residue arginine 261–glutamate 263 coordinates ATP. Glutamate 284 is an L-serine binding site. ATP is bound at residue glutamate 348–serine 351. Serine 384 is an L-serine binding site.

This sequence belongs to the class-II aminoacyl-tRNA synthetase family. Type-1 seryl-tRNA synthetase subfamily. As to quaternary structure, homodimer. The tRNA molecule binds across the dimer.

It is found in the cytoplasm. The catalysed reaction is tRNA(Ser) + L-serine + ATP = L-seryl-tRNA(Ser) + AMP + diphosphate + H(+). It catalyses the reaction tRNA(Sec) + L-serine + ATP = L-seryl-tRNA(Sec) + AMP + diphosphate + H(+). Its pathway is aminoacyl-tRNA biosynthesis; selenocysteinyl-tRNA(Sec) biosynthesis; L-seryl-tRNA(Sec) from L-serine and tRNA(Sec): step 1/1. Catalyzes the attachment of serine to tRNA(Ser). Is also able to aminoacylate tRNA(Sec) with serine, to form the misacylated tRNA L-seryl-tRNA(Sec), which will be further converted into selenocysteinyl-tRNA(Sec). The sequence is that of Serine--tRNA ligase from Streptococcus thermophilus (strain ATCC BAA-491 / LMD-9).